The chain runs to 28 residues: Ribosome-inactivating protein pleuturegin (28 aa).

This sequence belongs to the ribosome-inactivating protein family.

The enzyme catalyses Endohydrolysis of the N-glycosidic bond at one specific adenosine on the 28S rRNA.. Inhibits protein synthesis in animal cells. Does not possess ribonuclease activity. This is Ribosome-inactivating protein pleuturegin from Pleurotus tuber-regium (King tuber oyster mushroom).